Reading from the N-terminus, the 471-residue chain is Uronate isomerase (471 aa).

Belongs to the metallo-dependent hydrolases superfamily. Uronate isomerase family.

The enzyme catalyses D-glucuronate = D-fructuronate. It carries out the reaction aldehydo-D-galacturonate = keto-D-tagaturonate. It participates in carbohydrate metabolism; pentose and glucuronate interconversion. This chain is Uronate isomerase, found in Xanthomonas campestris pv. campestris (strain 8004).